The chain runs to 340 residues: Phenylalanine--tRNA ligase alpha subunit (340 aa).

A Mg(2+)-binding site is contributed by Glu254.

It belongs to the class-II aminoacyl-tRNA synthetase family. Phe-tRNA synthetase alpha subunit type 1 subfamily. Tetramer of two alpha and two beta subunits. The cofactor is Mg(2+).

The protein resides in the cytoplasm. It carries out the reaction tRNA(Phe) + L-phenylalanine + ATP = L-phenylalanyl-tRNA(Phe) + AMP + diphosphate + H(+). The protein is Phenylalanine--tRNA ligase alpha subunit of Acidithiobacillus ferrooxidans (strain ATCC 23270 / DSM 14882 / CIP 104768 / NCIMB 8455) (Ferrobacillus ferrooxidans (strain ATCC 23270)).